The chain runs to 309 residues: Transcription elongation factor S-II (309 aa).

One can recognise a TFIIS N-terminal domain in the interval 5 to 79 (EVLVHVKNLE…SSWKDAINKN (75 aa)). The interval 78–142 (KNKRSRQAQQ…NSKNDGVDTA (65 aa)) is disordered. The span at 88 to 102 (HHQDHAPGNAEDKTT) shows a compositional bias: basic and acidic residues. Over residues 103 to 120 (VGESVNGVQQPASSQSDA) the composition is skewed to polar residues. Serine 116 is subject to Phosphoserine. One can recognise a TFIIS central domain in the interval 148–264 (LRDQVLKALY…NAQGATIERS (117 aa)). The TFIIS-type zinc finger occupies 267–307 (DRFTCGKCKEKKVSYYQLQTRSADEPLTTFCTCEACGNRWK). Residues cysteine 271, cysteine 274, cysteine 299, and cysteine 302 each coordinate Zn(2+).

Belongs to the TFS-II family.

It is found in the nucleus. Functionally, necessary for efficient RNA polymerase II transcription elongation past template-encoded arresting sites. The arresting sites in DNA have the property of trapping a certain fraction of elongating RNA polymerases that pass through, resulting in locked ternary complexes. Cleavage of the nascent transcript by S-II allows the resumption of elongation from the new 3'-terminus. In terms of biological role, can promote the transfer of one strand of a double-stranded DNA molecule to a homologous single strand and thus may be involved in recombination. In Saccharomyces cerevisiae (strain ATCC 204508 / S288c) (Baker's yeast), this protein is Transcription elongation factor S-II (DST1).